A 359-amino-acid polypeptide reads, in one-letter code: Pyruvate dehydrogenase E1 component subunit beta, mitochondrial (359 aa).

A mitochondrion-targeting transit peptide spans 1-30; that stretch reads MAVVAVLVRKPLEQVSGLLRRRFHRTAPAA. Tyr67 is modified (phosphotyrosine). Thiamine diphosphate is bound at residue Glu89. Residues Ile142, Ala190, Ile191, Asp193, and Asn195 each coordinate K(+). At Lys354 the chain carries N6-acetyllysine.

As to quaternary structure, heterotetramer of two PDHA1 and two PDHB subunits. The heterotetramer interacts with DLAT, and is part of the multimeric pyruvate dehydrogenase complex that contains multiple copies of pyruvate dehydrogenase (E1), dihydrolipoamide acetyltransferase (DLAT, E2) and lipoamide dehydrogenase (DLD, E3). These subunits are bound to an inner core composed of about 48 DLAT and 12 PDHX molecules. Interacts with DLAT. It depends on thiamine diphosphate as a cofactor.

The protein localises to the mitochondrion matrix. It carries out the reaction N(6)-[(R)-lipoyl]-L-lysyl-[protein] + pyruvate + H(+) = N(6)-[(R)-S(8)-acetyldihydrolipoyl]-L-lysyl-[protein] + CO2. In terms of biological role, the pyruvate dehydrogenase complex catalyzes the overall conversion of pyruvate to acetyl-CoA and CO(2), and thereby links the glycolytic pathway to the tricarboxylic cycle. The polypeptide is Pyruvate dehydrogenase E1 component subunit beta, mitochondrial (PDHB) (Bos taurus (Bovine)).